Here is a 101-residue protein sequence, read N- to C-terminus: Movement protein (101 aa).

Residues 30 to 50 (EVAVLSFVALICIYLLYLWVL) traverse the membrane as a helical segment. A disordered region spans residues 78 to 101 (RSPIPNTLEPTAPVHPGPFVPGSG). Residues 90–101 (PVHPGPFVPGSG) show a composition bias toward pro residues.

The protein belongs to the mastrevirus movement protein family. In terms of assembly, interacts with the capsid protein (CP). Part of a MP-CP-viral DNA complex.

It localises to the host membrane. Functionally, involved in the viral transport within, and between cells. The polypeptide is Movement protein (Maize streak virus genotype E (isolate Pat) (MSV)).